The chain runs to 384 residues: Protein cutoff (384 aa).

This sequence belongs to the DXO/Dom3Z family. Component of the Rhino-Deadlock-Cutoff (RDC) complex, composed of rhi/rhino, del/deadlock and cuff/cutoff. Interacts with rhi/rhino; this interaction is indirect and is mediated by del/deadlock. Interacts with del/deadlock (via C-terminal); this interaction is direct. Interacts with Rat1.

Its subcellular location is the cytoplasm. The protein localises to the nucleus. The protein resides in the chromosome. Its function is as follows. Involved in the piRNA pathway in germline tissues. Part of the Rhino-Deadlock-Cutoff (RDC) complex that stimulates piRNA biogenesis from chromatin regions corresponding to dual-strand, but not single-stranded, piRNA clusters. Promotes transcription of long piRNA precursors by preventing termination at canonical poly(A) sites. As part of the RDC complex, is recruited to chromatin enriched in histone modification H3K9me3 and might contribute to complex interaction by binding nascent transcript nucleic acid chains. Associates with chromatin upon exposure to homologous piRNA. Suppresses cleavage at canonical poly(A) sites by blocking recruitment of the cleavage and polyadenylation specificity factor (CPSF) complex and prevents transcriptional termination by RNA polymerase II, facilitating transcriptional read-through. As part of the RDC complex, involved in suppression of splicing. Catalytically inactive, lacking 5'-3' exonuclease and pyrophosphohydrolase activities. Stabilizes uncapped piRNA precursors in the nucleus, probably by sequestering or blocking the exonuclease activity of Rat1. May also be involved in siRNA biogenesis from dual-strand piRNA clusters. This chain is Protein cutoff (cuff), found in Drosophila melanogaster (Fruit fly).